A 93-amino-acid polypeptide reads, in one-letter code: Small ribosomal subunit protein uS19 (93 aa).

The protein belongs to the universal ribosomal protein uS19 family.

Its function is as follows. Protein S19 forms a complex with S13 that binds strongly to the 16S ribosomal RNA. The protein is Small ribosomal subunit protein uS19 of Geotalea uraniireducens (strain Rf4) (Geobacter uraniireducens).